A 249-amino-acid polypeptide reads, in one-letter code: Proteasome subunit alpha type-7-B (249 aa).

This sequence belongs to the peptidase T1A family. The 26S proteasome consists of a 20S proteasome core and two 19S regulatory subunits. The 20S proteasome core is composed of 28 subunits that are arranged in four stacked rings, resulting in a barrel-shaped structure. The two end rings are each formed by seven alpha subunits, and the two central rings are each formed by seven beta subunits. The catalytic chamber with the active sites is on the inside of the barrel.

The protein localises to the cytoplasm. The protein resides in the nucleus. In terms of biological role, the proteasome is a multicatalytic proteinase complex which is characterized by its ability to cleave peptides with Arg, Phe, Tyr, Leu, and Glu adjacent to the leaving group at neutral or slightly basic pH. The proteasome has an ATP-dependent proteolytic activity. This Oryza sativa subsp. indica (Rice) protein is Proteasome subunit alpha type-7-B (PAD1).